A 314-amino-acid chain; its full sequence is Acetyl-coenzyme A carboxylase carboxyl transferase subunit beta (314 aa).

The region spanning 37 to 307 is the CoA carboxyltransferase N-terminal domain; it reads LWQKCPACDA…MSLPALEPTY (271 aa). 4 residues coordinate Zn(2+): C41, C44, C60, and C63. The C4-type zinc finger occupies 41-63; that stretch reads CPACDALTYTKDLQQNWQVCPSC.

The protein belongs to the AccD/PCCB family. Acetyl-CoA carboxylase is a heterohexamer composed of biotin carboxyl carrier protein (AccB), biotin carboxylase (AccC) and two subunits each of ACCase subunit alpha (AccA) and ACCase subunit beta (AccD). The cofactor is Zn(2+).

It localises to the cytoplasm. The enzyme catalyses N(6)-carboxybiotinyl-L-lysyl-[protein] + acetyl-CoA = N(6)-biotinyl-L-lysyl-[protein] + malonyl-CoA. It participates in lipid metabolism; malonyl-CoA biosynthesis; malonyl-CoA from acetyl-CoA: step 1/1. In terms of biological role, component of the acetyl coenzyme A carboxylase (ACC) complex. Biotin carboxylase (BC) catalyzes the carboxylation of biotin on its carrier protein (BCCP) and then the CO(2) group is transferred by the transcarboxylase to acetyl-CoA to form malonyl-CoA. This chain is Acetyl-coenzyme A carboxylase carboxyl transferase subunit beta, found in Synechococcus sp. (strain JA-3-3Ab) (Cyanobacteria bacterium Yellowstone A-Prime).